Reading from the N-terminus, the 276-residue chain is Glyoxal reductase (276 aa).

Y54 serves as the catalytic Proton donor. Residue H112 participates in substrate binding. Residue S190–N242 participates in NADP(+) binding.

The protein belongs to the aldo/keto reductase family.

The catalysed reaction is (S)-lactaldehyde + NADP(+) = methylglyoxal + NADPH + H(+). Reduces glyoxal and methylglyoxal (2-oxopropanal). Is not involved in the vitamin B6 biosynthesis. The sequence is that of Glyoxal reductase (yvgN) from Bacillus subtilis (strain 168).